A 65-amino-acid polypeptide reads, in one-letter code: Large ribosomal subunit protein uL29 (65 aa).

Belongs to the universal ribosomal protein uL29 family.

This Delftia acidovorans (strain DSM 14801 / SPH-1) protein is Large ribosomal subunit protein uL29.